Here is an 814-residue protein sequence, read N- to C-terminus: Rap guanine nucleotide exchange factor 5 (814 aa).

The DEP domain maps to 43–118 (LQAADLVKDR…DNYVFYQFSS (76 aa)). An N-terminal Ras-GEF domain is found at 301-434 (ARYVVVSGTP…ELKEFQKILG (134 aa)). The Ras-GEF domain occupies 578–813 (NTWDLALELM…FELSHRLEPR (236 aa)).

Its subcellular location is the nucleus. Guanine nucleotide exchange factor (GEF) for RAP1A, RAP2A and MRAS/M-Ras-GTP. Its association with MRAS inhibits Rap1 activation. In Mus musculus (Mouse), this protein is Rap guanine nucleotide exchange factor 5 (Rapgef5).